Here is a 271-residue protein sequence, read N- to C-terminus: Glutamate racemase (271 aa).

Substrate contacts are provided by residues 10-11 (DS) and 42-43 (YG). Cysteine 73 acts as the Proton donor/acceptor in catalysis. 74 to 75 (NS) lines the substrate pocket. Cysteine 183 (proton donor/acceptor) is an active-site residue. 184-185 (TH) lines the substrate pocket.

This sequence belongs to the aspartate/glutamate racemases family.

It carries out the reaction L-glutamate = D-glutamate. It participates in cell wall biogenesis; peptidoglycan biosynthesis. Provides the (R)-glutamate required for cell wall biosynthesis. This Saccharopolyspora erythraea (strain ATCC 11635 / DSM 40517 / JCM 4748 / NBRC 13426 / NCIMB 8594 / NRRL 2338) protein is Glutamate racemase.